Consider the following 115-residue polypeptide: ESX-1 secretion-associated protein EspL (115 aa).

The protein is ESX-1 secretion-associated protein EspL of Mycobacterium tuberculosis (strain CDC 1551 / Oshkosh).